The primary structure comprises 568 residues: Calcium-dependent protein kinase 5 (568 aa).

The 255-residue stretch at 125–379 folds into the Protein kinase domain; it reads EIDRYKLGKG…VEQVLKHRWF (255 aa). Residues 131 to 139 and K154 contribute to the ATP site; that span reads LGKGSYGNV. D245 acts as the Proton acceptor in catalysis. Positions 400-408 match the J domain autoinhibitory motif motif; it reads KFKEFHKLC. The segment at 400 to 435 is j domain; the sequence is KFKEFHKLCKIKKLAVTCIAYQLNEKDIGKLKKTFE. Positions 409–418 match the J domain EF-hand interaction motif motif; the sequence is KIKKLAVTCI. 4 EF-hand domains span residues 425–460, 462–495, 496–531, and 534–568; these read KDIG…NDNE, DREL…HSIF, QQDV…SAVQ, and FSKE…GVKE. Ca(2+)-binding residues include D438, N440, D442, E449, D473, D475, N477, E484, D509, D511, D513, E520, D547, N549, D551, and E558.

This sequence belongs to the protein kinase superfamily. Ser/Thr protein kinase family. CDPK subfamily. Requires Mg(2+) as cofactor. Post-translationally, may be palmitoylated. Autophosphorylated in vitro.

The protein localises to the cytoplasm. The protein resides in the cytoplasmic vesicle. Its subcellular location is the secretory vesicle. It is found in the microneme membrane. It localises to the cell membrane. The enzyme catalyses L-seryl-[protein] + ATP = O-phospho-L-seryl-[protein] + ADP + H(+). It catalyses the reaction L-threonyl-[protein] + ATP = O-phospho-L-threonyl-[protein] + ADP + H(+). Activated by calcium. Upon calcium binding to the EF-hand domains, the C-terminus of the junction domain (J domain) undergoes a conformational change which results in the dissociation of the pseudo-substrate inhibitory motif from the catalytic domain. This, in turn, may facilitate the autophosphorylation of the activation loop at Thr-285, which leads to the kinase activation. Calcium-dependent protein kinase which acts as a sensor and effector of intracellular Ca(2+) levels probably in part downstream of cGMP-activated PKG kinase. Plays a central role in host erythrocytes and hepatocytes infection cycles. During the liver stage, involved in sporozoite motility and thus in sporozoite invasion of host hepatocytes, probably together with CDPK1 and CDPK4. Involved in merosome egress from host hepatocytes, probably together with CDPK4. Required for the release of hepatic merozoites from merosomes in the host blood stream. During the asexual blood stage, required for merozoite egress from host erythrocytes by triggering microneme secretion. Phosphorylates transporter NPT1 at late schizont stage. This is Calcium-dependent protein kinase 5 from Plasmodium falciparum (isolate 3D7).